A 930-amino-acid polypeptide reads, in one-letter code: Type I restriction enzyme SsaAORF53P endonuclease subunit (930 aa).

The region spanning 254 to 418 is the Helicase ATP-binding domain; it reads HQATETSNNG…DGRSTADIFG (165 aa). Position 268–274 (268–274) interacts with ATP; it reads TTGSGKT.

The protein belongs to the HsdR family. The type I restriction/modification system is composed of three polypeptides R, M and S.

The catalysed reaction is Endonucleolytic cleavage of DNA to give random double-stranded fragments with terminal 5'-phosphates, ATP is simultaneously hydrolyzed.. Its function is as follows. The restriction (R) subunit of a type I restriction enzyme that recognizes an undetermined sequence and cleaves a random distance away. Subunit R is required for both nuclease and ATPase activities, but not for modification. After locating a non-methylated recognition site, the enzyme complex serves as a molecular motor that translocates DNA in an ATP-dependent manner until a collision occurs that triggers cleavage. This Staphylococcus saprophyticus subsp. saprophyticus (strain ATCC 15305 / DSM 20229 / NCIMB 8711 / NCTC 7292 / S-41) protein is Type I restriction enzyme SsaAORF53P endonuclease subunit.